The primary structure comprises 123 residues: Class II hydrophobin 2 (123 aa).

Positions 1–16 (MRSFLVIATLAVGAFG) are cleaved as a signal peptide. 4 cysteine pairs are disulfide-bonded: Cys-22-Cys-70, Cys-32-Cys-61, Cys-33-Cys-45, and Cys-71-Cys-82.

It belongs to the cerato-ulmin hydrophobin family. As to quaternary structure, homodimer. Homodimers further self-assemble to form highly ordered films at water-air interfaces through intermolecular interactions.

The protein resides in the secreted. Its subcellular location is the cell wall. Its function is as follows. Aerial growth, conidiation, and dispersal of filamentous fungi in the environment rely upon a capability of their secreting small amphipathic proteins called hydrophobins (HPBs) with low sequence identity. Class I can self-assemble into an outermost layer of rodlet bundles on aerial cell surfaces, conferring cellular hydrophobicity that supports fungal growth, development and dispersal; whereas Class II form highly ordered films at water-air interfaces through intermolecular interactions but contribute nothing to the rodlet structure. Hyd2 is a class II hydrophobin that plays probably a role in intraspecific signaling or hyphal fusion. Not necessary for root adhesion and colonization. Might play an essential role since no deletion mutants could be obtained. This Bionectria ochroleuca (Gliocladium roseum) protein is Class II hydrophobin 2.